Reading from the N-terminus, the 207-residue chain is ATP-dependent Clp protease proteolytic subunit (207 aa).

Ser111 (nucleophile) is an active-site residue. Residue His136 is part of the active site.

It belongs to the peptidase S14 family. In terms of assembly, fourteen ClpP subunits assemble into 2 heptameric rings which stack back to back to give a disk-like structure with a central cavity, resembling the structure of eukaryotic proteasomes.

The protein resides in the cytoplasm. The catalysed reaction is Hydrolysis of proteins to small peptides in the presence of ATP and magnesium. alpha-casein is the usual test substrate. In the absence of ATP, only oligopeptides shorter than five residues are hydrolyzed (such as succinyl-Leu-Tyr-|-NHMec, and Leu-Tyr-Leu-|-Tyr-Trp, in which cleavage of the -Tyr-|-Leu- and -Tyr-|-Trp bonds also occurs).. Functionally, cleaves peptides in various proteins in a process that requires ATP hydrolysis. Has a chymotrypsin-like activity. Plays a major role in the degradation of misfolded proteins. This chain is ATP-dependent Clp protease proteolytic subunit, found in Aliivibrio fischeri (strain ATCC 700601 / ES114) (Vibrio fischeri).